We begin with the raw amino-acid sequence, 623 residues long: Chaperone protein DnaK (623 aa).

A Phosphothreonine; by autocatalysis modification is found at T197. A compositionally biased stretch (basic and acidic residues) spans 595 to 615 (AENMYKKDEPNTANDKKKKDD). The interval 595–623 (AENMYKKDEPNTANDKKKKDDDVIDAEVE) is disordered.

It belongs to the heat shock protein 70 family.

In terms of biological role, acts as a chaperone. The polypeptide is Chaperone protein DnaK (Campylobacter jejuni subsp. doylei (strain ATCC BAA-1458 / RM4099 / 269.97)).